The primary structure comprises 183 residues: Translation initiation factor IF-3 (183 aa).

It belongs to the IF-3 family. As to quaternary structure, monomer.

Its subcellular location is the cytoplasm. Its function is as follows. IF-3 binds to the 30S ribosomal subunit and shifts the equilibrium between 70S ribosomes and their 50S and 30S subunits in favor of the free subunits, thus enhancing the availability of 30S subunits on which protein synthesis initiation begins. The chain is Translation initiation factor IF-3 from Yersinia enterocolitica serotype O:8 / biotype 1B (strain NCTC 13174 / 8081).